Reading from the N-terminus, the 1875-residue chain is Soluble starch synthase 3a, chloroplastic/amyloplastic (1875 aa).

A chloroplast-targeting transit peptide spans 1–49 (MEMALRPQSLLCPRSRLKVVIRPASSASGGGLAQYFLMTRRYTGSRIVR). A coiled-coil region spans residues 1007–1065 (KRELERVATEEAERRRHAEEQQRMGEQRAAEQAAREQAKKEIELKKNKLQNLLSSARTH). The disordered stretch occupies residues 1014 to 1043 (ATEEAERRRHAEEQQRMGEQRAAEQAAREQ).

The protein belongs to the glycosyltransferase 1 family. Bacterial/plant glycogen synthase subfamily. In terms of tissue distribution, expressed in the endosperm.

The protein resides in the plastid. The protein localises to the chloroplast. Its subcellular location is the amyloplast. It catalyses the reaction [(1-&gt;4)-alpha-D-glucosyl](n) + ADP-alpha-D-glucose = [(1-&gt;4)-alpha-D-glucosyl](n+1) + ADP + H(+). Its pathway is glycan biosynthesis; starch biosynthesis. Involved in starch synthesis in endosperm amyloplasts. Plays an important role in the elongation of amylopectin B chains. This is Soluble starch synthase 3a, chloroplastic/amyloplastic from Oryza sativa subsp. japonica (Rice).